A 285-amino-acid polypeptide reads, in one-letter code: Nucleotide-binding protein Glov_2163 (285 aa).

Position 8–15 (8–15 (GMSGSGKS)) interacts with ATP. A GTP-binding site is contributed by 59–62 (DIRG).

Belongs to the RapZ-like family.

In terms of biological role, displays ATPase and GTPase activities. The chain is Nucleotide-binding protein Glov_2163 from Trichlorobacter lovleyi (strain ATCC BAA-1151 / DSM 17278 / SZ) (Geobacter lovleyi).